A 375-amino-acid chain; its full sequence is Pectate lyase B (375 aa).

A signal peptide spans 1-22 (MKSLITPIAAGLLLAFSQYSLA). Cysteine 93 and cysteine 176 are disulfide-bonded. Aspartate 150, aspartate 152, glutamate 187, and aspartate 191 together coordinate Ca(2+). Arginine 240 is an active-site residue. Cysteine 351 and cysteine 374 are oxidised to a cystine.

It belongs to the polysaccharide lyase 1 family. PLADES subfamily. Ca(2+) is required as a cofactor.

The protein localises to the secreted. The enzyme catalyses Eliminative cleavage of (1-&gt;4)-alpha-D-galacturonan to give oligosaccharides with 4-deoxy-alpha-D-galact-4-enuronosyl groups at their non-reducing ends.. It participates in glycan metabolism; pectin degradation; 2-dehydro-3-deoxy-D-gluconate from pectin: step 2/5. Its function is as follows. Involved in maceration and soft-rotting of plant tissue. The chain is Pectate lyase B (pelB) from Dickeya chrysanthemi (Pectobacterium chrysanthemi).